A 299-amino-acid polypeptide reads, in one-letter code: ATP phosphoribosyltransferase (299 aa).

This sequence belongs to the ATP phosphoribosyltransferase family. Long subfamily. In terms of assembly, equilibrium between an active dimeric form, an inactive hexameric form and higher aggregates. Interconversion between the various forms is largely reversible and is influenced by the natural substrates and inhibitors of the enzyme. The cofactor is Mg(2+).

The protein localises to the cytoplasm. The enzyme catalyses 1-(5-phospho-beta-D-ribosyl)-ATP + diphosphate = 5-phospho-alpha-D-ribose 1-diphosphate + ATP. The protein operates within amino-acid biosynthesis; L-histidine biosynthesis; L-histidine from 5-phospho-alpha-D-ribose 1-diphosphate: step 1/9. Its activity is regulated as follows. Feedback inhibited by histidine. Catalyzes the condensation of ATP and 5-phosphoribose 1-diphosphate to form N'-(5'-phosphoribosyl)-ATP (PR-ATP). Has a crucial role in the pathway because the rate of histidine biosynthesis seems to be controlled primarily by regulation of HisG enzymatic activity. The sequence is that of ATP phosphoribosyltransferase from Buchnera aphidicola subsp. Melaphis rhois.